Reading from the N-terminus, the 439-residue chain is GTPase Der (439 aa).

EngA-type G domains lie at 2–168 and 181–357; these read ATVL…EEKG and IKVA…ASYT. Residues 8–15, 55–59, 118–121, 187–194, 234–238, and 300–303 each bind GTP; these read GKPNVGKS, DTCGV, NKTE, GRPNVGKS, DTAGL, and NKWD. In terms of domain architecture, KH-like spans 358 to 439; the sequence is TKVPSSAINS…PIFLKFKRSR (82 aa).

This sequence belongs to the TRAFAC class TrmE-Era-EngA-EngB-Septin-like GTPase superfamily. EngA (Der) GTPase family. In terms of assembly, associates with the 50S ribosomal subunit.

Functionally, GTPase that plays an essential role in the late steps of ribosome biogenesis. In Thermotoga petrophila (strain ATCC BAA-488 / DSM 13995 / JCM 10881 / RKU-1), this protein is GTPase Der.